A 374-amino-acid polypeptide reads, in one-letter code: Anhydro-N-acetylmuramic acid kinase (374 aa).

15-22 (GTSADGID) is an ATP binding site.

This sequence belongs to the anhydro-N-acetylmuramic acid kinase family.

The catalysed reaction is 1,6-anhydro-N-acetyl-beta-muramate + ATP + H2O = N-acetyl-D-muramate 6-phosphate + ADP + H(+). It functions in the pathway amino-sugar metabolism; 1,6-anhydro-N-acetylmuramate degradation. It participates in cell wall biogenesis; peptidoglycan recycling. Catalyzes the specific phosphorylation of 1,6-anhydro-N-acetylmuramic acid (anhMurNAc) with the simultaneous cleavage of the 1,6-anhydro ring, generating MurNAc-6-P. Is required for the utilization of anhMurNAc either imported from the medium or derived from its own cell wall murein, and thus plays a role in cell wall recycling. The protein is Anhydro-N-acetylmuramic acid kinase of Xanthomonas axonopodis pv. citri (strain 306).